The sequence spans 220 residues: Tumor protein D54 (220 aa).

Position 1 is an N-acetylmethionine (Met-1). Phosphoserine is present on residues Ser-3, Ser-12, and Ser-19. A coiled-coil region spans residues 40–82; the sequence is GLTEGEEEELRAELAKVEEEIVTLRQVLAAKERHCGELKRRLG. A phosphoserine mark is found at Ser-96, Ser-149, Ser-168, and Ser-175. Thr-177 bears the Phosphothreonine mark. The residue at position 180 (Ser-180) is a Phosphoserine. Thr-187 is subject to Phosphothreonine. The disordered stretch occupies residues 189-220; the sequence is KSKVVGGRENGSDNLPPSPGSGDQTLPDHAPF. Phosphoserine is present on residues Ser-206 and Ser-209.

This sequence belongs to the TPD52 family. Forms a homodimer or heterodimer with other members of the family. Interacts with MAL2.

The polypeptide is Tumor protein D54 (Tpd52l2) (Mus musculus (Mouse)).